The following is a 113-amino-acid chain: Large ribosomal subunit protein uL22 (113 aa).

Belongs to the universal ribosomal protein uL22 family. As to quaternary structure, part of the 50S ribosomal subunit.

Its function is as follows. This protein binds specifically to 23S rRNA; its binding is stimulated by other ribosomal proteins, e.g. L4, L17, and L20. It is important during the early stages of 50S assembly. It makes multiple contacts with different domains of the 23S rRNA in the assembled 50S subunit and ribosome. In terms of biological role, the globular domain of the protein is located near the polypeptide exit tunnel on the outside of the subunit, while an extended beta-hairpin is found that lines the wall of the exit tunnel in the center of the 70S ribosome. This chain is Large ribosomal subunit protein uL22, found in Geobacillus stearothermophilus (Bacillus stearothermophilus).